The following is a 91-amino-acid chain: Large ribosomal subunit protein bL31B (91 aa).

The protein belongs to the bacterial ribosomal protein bL31 family. Type B subfamily. Part of the 50S ribosomal subunit.

This Neisseria gonorrhoeae (strain ATCC 700825 / FA 1090) protein is Large ribosomal subunit protein bL31B.